The primary structure comprises 273 residues: MLKLLLLTLPLLSSLVHAAPGPAMTREGIVGGQEAHGNKWPWQVSLRANDTYWMHFCGGSLIHPQWVLTAAHCVGPDVADPNKVRVQLRKQYLYYHDHLMTVSQIITHPDFYIVQDGADIALLKLTNPVNISDYVHPVPLPPASETFPSGTLCWVTGWGNIDNGVNLPPPFPLKEVQVPIIENHLCDLKYHKGLITGDNVHIVRDDMLCAGNEGHDSCQGDSGGPLVCKVEDTWLQAGVVSWGEGCAQPNRPGIYTRVTYYLDWIHHYVPKDF.

Residues 1–18 form the signal peptide; the sequence is MLKLLLLTLPLLSSLVHA. Residues 19–28 constitute a propeptide, activation peptide; the sequence is APGPAMTREG. Residues 29 to 270 enclose the Peptidase S1 domain; the sequence is IVGGQEAHGN…YLDWIHHYVP (242 aa). A glycan (N-linked (GlcNAc...) asparagine) is linked at Asn49. The cysteines at positions 57 and 73 are disulfide-linked. Catalysis depends on charge relay system residues His72 and Asp119. A glycan (N-linked (GlcNAc...) asparagine) is linked at Asn130. 3 disulfides stabilise this stretch: Cys153–Cys228, Cys186–Cys209, and Cys218–Cys246. The Charge relay system role is filled by Ser222.

This sequence belongs to the peptidase S1 family. Tryptase subfamily.

The catalysed reaction is Preferential cleavage: Arg-|-Xaa, Lys-|-Xaa, but with more restricted specificity than trypsin.. Its function is as follows. Tryptase is the major neutral protease present in mast cells and is secreted upon the coupled activation-degranulation response of this cell type. May play a role in innate immunity. The sequence is that of Tryptase (Tpsab1) from Mus musculus (Mouse).